The sequence spans 253 residues: 1-(5-phosphoribosyl)-5-[(5-phosphoribosylamino)methylideneamino] imidazole-4-carboxamide isomerase (253 aa).

D11 acts as the Proton acceptor in catalysis. D132 (proton donor) is an active-site residue.

The protein belongs to the HisA/HisF family.

Its subcellular location is the cytoplasm. The enzyme catalyses 1-(5-phospho-beta-D-ribosyl)-5-[(5-phospho-beta-D-ribosylamino)methylideneamino]imidazole-4-carboxamide = 5-[(5-phospho-1-deoxy-D-ribulos-1-ylimino)methylamino]-1-(5-phospho-beta-D-ribosyl)imidazole-4-carboxamide. The protein operates within amino-acid biosynthesis; L-histidine biosynthesis; L-histidine from 5-phospho-alpha-D-ribose 1-diphosphate: step 4/9. This is 1-(5-phosphoribosyl)-5-[(5-phosphoribosylamino)methylideneamino] imidazole-4-carboxamide isomerase from Methylobacterium nodulans (strain LMG 21967 / CNCM I-2342 / ORS 2060).